The following is a 275-amino-acid chain: Undecaprenyl-diphosphatase (275 aa).

7 helical membrane-spanning segments follow: residues 1 to 21, 41 to 61, 95 to 115, 118 to 138, 192 to 212, 223 to 243, and 255 to 275; these read MTTFKAILLGIVQGLTEFLPV, ILFLTILLHVGTLFSVFFVYA, LLIIVATIPTGIIGLFFKDLF, FYNSTLIIGISLLVTGTLLWT, ATKFSFLISIPAILGATVFEV, FTLTMLIAGVLASFLSGVFAI, and LYYFSYYTWTVGSIVILFSLL.

It belongs to the UppP family.

It is found in the cell membrane. The catalysed reaction is di-trans,octa-cis-undecaprenyl diphosphate + H2O = di-trans,octa-cis-undecaprenyl phosphate + phosphate + H(+). Catalyzes the dephosphorylation of undecaprenyl diphosphate (UPP). Confers resistance to bacitracin. This chain is Undecaprenyl-diphosphatase, found in Alkaliphilus metalliredigens (strain QYMF).